A 365-amino-acid polypeptide reads, in one-letter code: Histidinol-phosphate aminotransferase (365 aa).

The disordered stretch occupies residues 1–21 (MSRPVPNPGILDIAPYTPGKS). N6-(pyridoxal phosphate)lysine is present on K221.

Belongs to the class-II pyridoxal-phosphate-dependent aminotransferase family. Histidinol-phosphate aminotransferase subfamily. In terms of assembly, homodimer. The cofactor is pyridoxal 5'-phosphate.

The catalysed reaction is L-histidinol phosphate + 2-oxoglutarate = 3-(imidazol-4-yl)-2-oxopropyl phosphate + L-glutamate. The protein operates within amino-acid biosynthesis; L-histidine biosynthesis; L-histidine from 5-phospho-alpha-D-ribose 1-diphosphate: step 7/9. The polypeptide is Histidinol-phosphate aminotransferase (Rhodopseudomonas palustris (strain ATCC BAA-98 / CGA009)).